We begin with the raw amino-acid sequence, 387 residues long: 1-deoxy-D-xylulose 5-phosphate reductoisomerase (387 aa).

Residues threonine 10, glycine 11, isoleucine 13, asparagine 38, and asparagine 122 each coordinate NADPH. Lysine 123 contributes to the 1-deoxy-D-xylulose 5-phosphate binding site. Residue glutamate 124 coordinates NADPH. Aspartate 148 serves as a coordination point for Mn(2+). The 1-deoxy-D-xylulose 5-phosphate site is built by serine 149, glutamate 150, serine 174, and histidine 197. Residue glutamate 150 coordinates Mn(2+). Glycine 203 provides a ligand contact to NADPH. Positions 210, 215, 216, and 219 each coordinate 1-deoxy-D-xylulose 5-phosphate. Residue glutamate 219 coordinates Mn(2+).

The protein belongs to the DXR family. Requires Mg(2+) as cofactor. It depends on Mn(2+) as a cofactor.

The catalysed reaction is 2-C-methyl-D-erythritol 4-phosphate + NADP(+) = 1-deoxy-D-xylulose 5-phosphate + NADPH + H(+). It functions in the pathway isoprenoid biosynthesis; isopentenyl diphosphate biosynthesis via DXP pathway; isopentenyl diphosphate from 1-deoxy-D-xylulose 5-phosphate: step 1/6. Its function is as follows. Catalyzes the NADPH-dependent rearrangement and reduction of 1-deoxy-D-xylulose-5-phosphate (DXP) to 2-C-methyl-D-erythritol 4-phosphate (MEP). The sequence is that of 1-deoxy-D-xylulose 5-phosphate reductoisomerase from Ehrlichia ruminantium (strain Gardel).